Consider the following 857-residue polypeptide: Phosphoenolpyruvate carboxylase (857 aa).

Catalysis depends on residues histidine 144 and lysine 530.

It belongs to the PEPCase type 1 family. In terms of assembly, homotetramer. It depends on Mg(2+) as a cofactor. In terms of processing, the N-terminus is blocked.

It catalyses the reaction oxaloacetate + phosphate = phosphoenolpyruvate + hydrogencarbonate. Functionally, forms oxaloacetate, a four-carbon dicarboxylic acid source for the tricarboxylic acid cycle. The chain is Phosphoenolpyruvate carboxylase (ppc) from Thermus sp. (strain 71).